Here is a 128-residue protein sequence, read N- to C-terminus: Histone H2A.2 (128 aa).

This sequence belongs to the histone H2A family. In terms of assembly, the nucleosome is a histone octamer containing two molecules each of H2A, H2B, H3 and H4 assembled in one H3-H4 heterotetramer and two H2A-H2B heterodimers. The octamer wraps approximately 147 bp of DNA. Expressed in the generative cell within the bicellular pollen. Not detected in other reproductive or vegetative tissues.

The protein localises to the nucleus. The protein resides in the chromosome. Functionally, core component of nucleosome. Nucleosomes wrap and compact DNA into chromatin, limiting DNA accessibility to the cellular machineries which require DNA as a template. Histones thereby play a central role in transcription regulation, DNA repair, DNA replication and chromosomal stability. DNA accessibility is regulated via a complex set of post-translational modifications of histones, also called histone code, and nucleosome remodeling. May be involved in the repression of gene expression in male gametes. This is Histone H2A.2 (gH2A) from Lilium longiflorum (Trumpet lily).